A 354-amino-acid polypeptide reads, in one-letter code: Rhodopsin (354 aa).

Residues 1–36 (MNGTEGPMFYVPMSNATGVVKSPYDYPQYYLVAPWA) are Extracellular-facing. Asn-2 and Asn-15 each carry an N-linked (GlcNAc...) asparagine glycan. A helical transmembrane segment spans residues 37–61 (YGCLAAYMFFLIITGFPINFLTLYV). Topologically, residues 62–73 (TIEHKKLRTPLN) are cytoplasmic. A helical membrane pass occupies residues 74-96 (YILLNLAISDLFMVFGGFTTTMY). Residues 97–110 (TSLHGYFVFGRIGC) are Extracellular-facing. Cys-110 and Cys-187 are disulfide-bonded. The chain crosses the membrane as a helical span at residues 111–133 (NLEGFFATLGGEMGLWSLVVLAF). The 'Ionic lock' involved in activated form stabilization motif lies at 134-136 (ERW). Topologically, residues 134–152 (ERWMVVCKPVSNFRFGENH) are cytoplasmic. A helical membrane pass occupies residues 153-173 (AIMGVVFTWFMACTCAVPPLV). Over 174–202 (GWSRYIPEGMQCSCGVDYYTRAPGYNNES) the chain is Extracellular. A helical membrane pass occupies residues 203–224 (FVIYMFLVHFIIPLIVIFFCYG). The Cytoplasmic segment spans residues 225 to 252 (RLVCTVKDAAAQQQESETTQRAEREVTR). Residues 253 to 274 (MVVIMVIGFLICWIPYASVAWY) form a helical membrane-spanning segment. Residues 275–286 (IFTHQGSEFGPV) lie on the Extracellular side of the membrane. A helical transmembrane segment spans residues 287–308 (FMTVPAFFAKSAAVYNPCIYIC). The residue at position 296 (Lys-296) is an N6-(retinylidene)lysine. At 309 to 354 (MNKQFRHCMITTLCCGKNPFEEEEGASTTASKTEASSVSSSSVSPA) the chain is on the cytoplasmic side. Residues Cys-322 and Cys-323 are each lipidated (S-palmitoyl cysteine). Residues 333 to 354 (GASTTASKTEASSVSSSSVSPA) are disordered. The span at 334–354 (ASTTASKTEASSVSSSSVSPA) shows a compositional bias: low complexity.

Belongs to the G-protein coupled receptor 1 family. Opsin subfamily. In terms of processing, phosphorylated on some or all of the serine and threonine residues present in the C-terminal region. Post-translationally, contains one covalently linked retinal chromophore.

It is found in the membrane. The protein localises to the cell projection. Its subcellular location is the cilium. It localises to the photoreceptor outer segment. Photoreceptor required for image-forming vision at low light intensity. While most salt water fish species use retinal as chromophore, most freshwater fish use 3-dehydroretinal, or a mixture of retinal and 3-dehydroretinal. Light-induced isomerization of 11-cis to all-trans retinal triggers a conformational change that activates signaling via G-proteins. Subsequent receptor phosphorylation mediates displacement of the bound G-protein alpha subunit by arrestin and terminates signaling. The chain is Rhodopsin (rho) from Cyprinus carpio (Common carp).